A 165-amino-acid chain; its full sequence is Urease accessory protein UreE (165 aa).

This sequence belongs to the UreE family.

It localises to the cytoplasm. Its function is as follows. Involved in urease metallocenter assembly. Binds nickel. Probably functions as a nickel donor during metallocenter assembly. The protein is Urease accessory protein UreE of Micrococcus luteus (strain ATCC 4698 / DSM 20030 / JCM 1464 / CCM 169 / CCUG 5858 / IAM 1056 / NBRC 3333 / NCIMB 9278 / NCTC 2665 / VKM Ac-2230) (Micrococcus lysodeikticus).